The following is a 413-amino-acid chain: Serine hydroxymethyltransferase (413 aa).

(6S)-5,6,7,8-tetrahydrofolate contacts are provided by residues L117 and 121-123 (GHL). K226 is modified (N6-(pyridoxal phosphate)lysine). Residues E241 and 349 to 351 (SPF) contribute to the (6S)-5,6,7,8-tetrahydrofolate site.

The protein belongs to the SHMT family. In terms of assembly, homodimer. Requires pyridoxal 5'-phosphate as cofactor.

It localises to the cytoplasm. The enzyme catalyses (6R)-5,10-methylene-5,6,7,8-tetrahydrofolate + glycine + H2O = (6S)-5,6,7,8-tetrahydrofolate + L-serine. It participates in one-carbon metabolism; tetrahydrofolate interconversion. It functions in the pathway amino-acid biosynthesis; glycine biosynthesis; glycine from L-serine: step 1/1. Functionally, catalyzes the reversible interconversion of serine and glycine with tetrahydrofolate (THF) serving as the one-carbon carrier. This reaction serves as the major source of one-carbon groups required for the biosynthesis of purines, thymidylate, methionine, and other important biomolecules. Also exhibits THF-independent aldolase activity toward beta-hydroxyamino acids, producing glycine and aldehydes, via a retro-aldol mechanism. This is Serine hydroxymethyltransferase from Halalkalibacterium halodurans (strain ATCC BAA-125 / DSM 18197 / FERM 7344 / JCM 9153 / C-125) (Bacillus halodurans).